Reading from the N-terminus, the 1235-residue chain is Cullin-associated NEDD8-dissociated protein 2 (1235 aa).

At Ser2 the chain carries N-acetylserine. HEAT repeat units follow at residues 2–39 (STGA…KDSI), 44–81 (DSER…KVKE), 83–119 (QVEN…ELPP), 129–167 (NVCR…RLGA), 171–208 (TFHA…ACST), 210–246 (LFVE…SVGR), 254–291 (AHLD…KCPK), 326–367 (TEDS…SRPD), 371–408 (DFHC…HTRP), 431–468 (AQVP…VLPG), 516–553 (PHLP…TLWP), 564–603 (PYVG…HLGD), 607–644 (DDLE…LRLD), 647–684 (PILA…SQGL), 689–726 (PAVR…TQPS), 730–769 (EVSG…TRPP), 771–812 (VEYS…ALSA), 856–893 (GPQR…GNLP), 895–930 (FLPF…DNLK), 932–965 (YVED…LVFV), 966–1002 (NPPY…DQPH), 1006–1043 (PLLK…NKPS), 1047–1083 (DLLD…DDGL), 1104–1140 (LDMC…LCPA), 1156–1193 (TCTA…NPEV), and 1203–1235 (SAQI…MELS). A disordered region spans residues 314–345 (YDHDSDDEEQMETEDSEFSEQESEDEYSDDDD). The segment covering 317-345 (DSDDEEQMETEDSEFSEQESEDEYSDDDD) has biased composition (acidic residues).

This sequence belongs to the CAND family. In terms of assembly, binds TBP, CNOT3 and UBE3C. Ubiquitinated and targeted for proteasomal degradation. Highly expressed in embryonic limb buds.

Its subcellular location is the nucleus. Its function is as follows. Probable assembly factor of SCF (SKP1-CUL1-F-box protein) E3 ubiquitin ligase complexes that promotes the exchange of the substrate-recognition F-box subunit in SCF complexes, thereby playing a key role in the cellular repertoire of SCF complexes. In Mus musculus (Mouse), this protein is Cullin-associated NEDD8-dissociated protein 2 (Cand2).